Here is a 236-residue protein sequence, read N- to C-terminus: 2,3,4,5-tetrahydropyridine-2,6-dicarboxylate N-acetyltransferase (236 aa).

The protein belongs to the transferase hexapeptide repeat family. DapH subfamily.

It catalyses the reaction (S)-2,3,4,5-tetrahydrodipicolinate + acetyl-CoA + H2O = L-2-acetamido-6-oxoheptanedioate + CoA. It functions in the pathway amino-acid biosynthesis; L-lysine biosynthesis via DAP pathway; LL-2,6-diaminopimelate from (S)-tetrahydrodipicolinate (acetylase route): step 1/3. Catalyzes the transfer of an acetyl group from acetyl-CoA to tetrahydrodipicolinate. The protein is 2,3,4,5-tetrahydropyridine-2,6-dicarboxylate N-acetyltransferase of Clostridium perfringens (strain SM101 / Type A).